We begin with the raw amino-acid sequence, 131 residues long: Small ribosomal subunit protein uS8 (131 aa).

Belongs to the universal ribosomal protein uS8 family. Part of the 30S ribosomal subunit. Contacts proteins S5 and S12.

Functionally, one of the primary rRNA binding proteins, it binds directly to 16S rRNA central domain where it helps coordinate assembly of the platform of the 30S subunit. This chain is Small ribosomal subunit protein uS8, found in Wolbachia pipientis wMel.